Consider the following 158-residue polypeptide: Anaerobic ribonucleoside-triphosphate reductase-activating protein (158 aa).

Residues C26, C30, and C33 each coordinate [4Fe-4S] cluster. S-adenosyl-L-methionine is bound by residues 32-34 (GCY) and G74.

Belongs to the organic radical-activating enzymes family. In terms of assembly, forms a tetramer composed of two NrdD and two NrdG subunits. The cofactor is [4Fe-4S] cluster.

It is found in the cytoplasm. The catalysed reaction is glycyl-[protein] + reduced [flavodoxin] + S-adenosyl-L-methionine = glycin-2-yl radical-[protein] + semiquinone [flavodoxin] + 5'-deoxyadenosine + L-methionine + H(+). Activation of anaerobic ribonucleoside-triphosphate reductase under anaerobic conditions by generation of an organic free radical, using S-adenosylmethionine and reduced flavodoxin as cosubstrates to produce 5'-deoxy-adenosine. The sequence is that of Anaerobic ribonucleoside-triphosphate reductase-activating protein (nrdG) from Pasteurella multocida (strain Pm70).